Consider the following 186-residue polypeptide: Ribulose bisphosphate carboxylase small subunit, chloroplastic 6 (186 aa).

The transit peptide at 1–60 (MASSMLSNAAVATTAASRSAGAQASMVAPFTGLKSVSAFPVTRKSSNDLSTVPSNGGKVQ) directs the protein to the chloroplast.

The protein belongs to the RuBisCO small chain family. In terms of assembly, heterohexadecamer of 8 large and 8 small subunits.

Its subcellular location is the plastid. It localises to the chloroplast. Functionally, ruBisCO catalyzes two reactions: the carboxylation of D-ribulose 1,5-bisphosphate, the primary event in carbon dioxide fixation, as well as the oxidative fragmentation of the pentose substrate. Both reactions occur simultaneously and in competition at the same active site. Although the small subunit is not catalytic it is essential for maximal activity. The chain is Ribulose bisphosphate carboxylase small subunit, chloroplastic 6 from Mesembryanthemum crystallinum (Common ice plant).